The following is a 70-amino-acid chain: ATP synthase subunit c (70 aa).

Transmembrane regions (helical) follow at residues 4–24 (IAAAIAIGLSALGAGIGNGLI) and 45–65 (IMFIGVGLVEALPIIGVVIAF).

It belongs to the ATPase C chain family. In terms of assembly, F-type ATPases have 2 components, F(1) - the catalytic core - and F(0) - the membrane proton channel. F(1) has five subunits: alpha(3), beta(3), gamma(1), delta(1), epsilon(1). F(0) has three main subunits: a(1), b(2) and c(10-14). The alpha and beta chains form an alternating ring which encloses part of the gamma chain. F(1) is attached to F(0) by a central stalk formed by the gamma and epsilon chains, while a peripheral stalk is formed by the delta and b chains.

The protein resides in the cell membrane. Functionally, f(1)F(0) ATP synthase produces ATP from ADP in the presence of a proton or sodium gradient. F-type ATPases consist of two structural domains, F(1) containing the extramembraneous catalytic core and F(0) containing the membrane proton channel, linked together by a central stalk and a peripheral stalk. During catalysis, ATP synthesis in the catalytic domain of F(1) is coupled via a rotary mechanism of the central stalk subunits to proton translocation. In terms of biological role, key component of the F(0) channel; it plays a direct role in translocation across the membrane. A homomeric c-ring of between 10-14 subunits forms the central stalk rotor element with the F(1) delta and epsilon subunits. This Staphylococcus aureus (strain Mu3 / ATCC 700698) protein is ATP synthase subunit c.